The following is a 341-amino-acid chain: S-adenosylmethionine:tRNA ribosyltransferase-isomerase (341 aa).

Belongs to the QueA family. In terms of assembly, monomer.

Its subcellular location is the cytoplasm. It catalyses the reaction 7-aminomethyl-7-carbaguanosine(34) in tRNA + S-adenosyl-L-methionine = epoxyqueuosine(34) in tRNA + adenine + L-methionine + 2 H(+). Its pathway is tRNA modification; tRNA-queuosine biosynthesis. Functionally, transfers and isomerizes the ribose moiety from AdoMet to the 7-aminomethyl group of 7-deazaguanine (preQ1-tRNA) to give epoxyqueuosine (oQ-tRNA). The chain is S-adenosylmethionine:tRNA ribosyltransferase-isomerase from Caldanaerobacter subterraneus subsp. tengcongensis (strain DSM 15242 / JCM 11007 / NBRC 100824 / MB4) (Thermoanaerobacter tengcongensis).